Consider the following 1271-residue polypeptide: DNA-directed RNA polymerase subunit beta (1271 aa).

This sequence belongs to the RNA polymerase beta chain family. In terms of assembly, the RNAP catalytic core consists of 2 alpha, 1 beta, 1 beta' and 1 omega subunit. When a sigma factor is associated with the core the holoenzyme is formed, which can initiate transcription.

It catalyses the reaction RNA(n) + a ribonucleoside 5'-triphosphate = RNA(n+1) + diphosphate. Its function is as follows. DNA-dependent RNA polymerase catalyzes the transcription of DNA into RNA using the four ribonucleoside triphosphates as substrates. This is DNA-directed RNA polymerase subunit beta from Acholeplasma laidlawii (strain PG-8A).